Consider the following 397-residue polypeptide: Bifunctional enzyme IspD/IspF (397 aa).

Residues 1–233 (MCAKKYKIAA…KLLFEEPKFR (233 aa)) are 2-C-methyl-D-erythritol 4-phosphate cytidylyltransferase. The segment at 233 to 397 (RVGAGYDIHK…VLLHTNFYWK (165 aa)) is 2-C-methyl-D-erythritol 2,4-cyclodiphosphate synthase. A divalent metal cation-binding residues include D239 and H241. 4-CDP-2-C-methyl-D-erythritol 2-phosphate-binding positions include 239 to 241 (DIH) and 270 to 271 (HS). A divalent metal cation is bound at residue H278. 4-CDP-2-C-methyl-D-erythritol 2-phosphate-binding positions include 292 to 294 (DIG), 368 to 371 (TTAE), Y375, and R378.

The protein in the N-terminal section; belongs to the IspD/TarI cytidylyltransferase family. IspD subfamily. This sequence in the C-terminal section; belongs to the IspF family. Requires a divalent metal cation as cofactor.

It carries out the reaction 2-C-methyl-D-erythritol 4-phosphate + CTP + H(+) = 4-CDP-2-C-methyl-D-erythritol + diphosphate. The enzyme catalyses 4-CDP-2-C-methyl-D-erythritol 2-phosphate = 2-C-methyl-D-erythritol 2,4-cyclic diphosphate + CMP. It participates in isoprenoid biosynthesis; isopentenyl diphosphate biosynthesis via DXP pathway; isopentenyl diphosphate from 1-deoxy-D-xylulose 5-phosphate: step 2/6. Its pathway is isoprenoid biosynthesis; isopentenyl diphosphate biosynthesis via DXP pathway; isopentenyl diphosphate from 1-deoxy-D-xylulose 5-phosphate: step 4/6. Bifunctional enzyme that catalyzes the formation of 4-diphosphocytidyl-2-C-methyl-D-erythritol from CTP and 2-C-methyl-D-erythritol 4-phosphate (MEP) (IspD), and catalyzes the conversion of 4-diphosphocytidyl-2-C-methyl-D-erythritol 2-phosphate (CDP-ME2P) to 2-C-methyl-D-erythritol 2,4-cyclodiphosphate (ME-CPP) with a corresponding release of cytidine 5-monophosphate (CMP) (IspF). In Wolbachia pipientis wMel, this protein is Bifunctional enzyme IspD/IspF.